A 169-amino-acid chain; its full sequence is MSEETIRLGRERRYLVLLGIICLALIGGALYMQIVLGEAPCPLCILQRYALLLIALFAFIGAAMRTRRSITVFEVLVVICAIAGAGVAGHHVYTQFYPAVSCGIDVLQPIVDDLPLAKIFPLGFQVDGFCSTPYPPILGLSLAQWALVAFVLVVILVPLLTSRNRKALR.

Topologically, residues methionine 1–tyrosine 14 are cytoplasmic. The helical transmembrane segment at leucine 15–tyrosine 31 threads the bilayer. The Periplasmic portion of the chain corresponds to methionine 32–tyrosine 49. Cysteine 41 and cysteine 44 are oxidised to a cystine. A helical membrane pass occupies residues alanine 50 to methionine 64. Residues arginine 65 to threonine 71 are Cytoplasmic-facing. A helical membrane pass occupies residues valine 72–glycine 89. Topologically, residues histidine 90–glutamine 144 are periplasmic. Cysteines 102 and 130 form a disulfide. Residues tryptophan 145–arginine 163 traverse the membrane as a helical segment. The Cytoplasmic portion of the chain corresponds to asparagine 164–arginine 169.

The protein belongs to the DsbB family.

It is found in the cell inner membrane. Its function is as follows. Required for disulfide bond formation in some periplasmic proteins. Acts by oxidizing the DsbA protein. This chain is Disulfide bond formation protein B 1, found in Pseudomonas fluorescens (strain Pf0-1).